Consider the following 156-residue polypeptide: Endoribonuclease YbeY (156 aa).

Zn(2+) contacts are provided by histidine 122, histidine 126, and histidine 132.

It belongs to the endoribonuclease YbeY family. Requires Zn(2+) as cofactor.

The protein resides in the cytoplasm. Functionally, single strand-specific metallo-endoribonuclease involved in late-stage 70S ribosome quality control and in maturation of the 3' terminus of the 16S rRNA. The sequence is that of Endoribonuclease YbeY from Syntrophomonas wolfei subsp. wolfei (strain DSM 2245B / Goettingen).